A 66-amino-acid polypeptide reads, in one-letter code: Surface composition regulator (66 aa).

It belongs to the GlgS family.

Functionally, major determinant of cell surface composition. Negatively regulates motility, adhesion and synthesis of biofilm exopolysaccharides. This is Surface composition regulator from Shigella dysenteriae serotype 1 (strain Sd197).